Reading from the N-terminus, the 113-residue chain is Non-specific lipid-transfer protein 6 (113 aa).

The first 19 residues, 1–19 (MRSLLLAVCLVLALHCGEA), serve as a signal peptide directing secretion. 4 cysteine pairs are disulfide-bonded: cysteine 23-cysteine 70, cysteine 33-cysteine 47, cysteine 48-cysteine 95, and cysteine 68-cysteine 109.

It belongs to the plant LTP family.

Functionally, plant non-specific lipid-transfer proteins transfer phospholipids as well as galactolipids across membranes. May play a role in wax or cutin deposition in the cell walls of expanding epidermal cells and certain secretory tissues. This chain is Non-specific lipid-transfer protein 6 (LTP6), found in Arabidopsis thaliana (Mouse-ear cress).